Here is a 198-residue protein sequence, read N- to C-terminus: Superoxide dismutase [Mn], mitochondrial (198 aa).

Residue histidine 26 participates in Mn(2+) binding. Position 34 is a 3'-nitrotyrosine (tyrosine 34). Residues lysine 44 and lysine 51 each carry the N6-acetyllysine; alternate modification. N6-succinyllysine; alternate is present on residues lysine 44 and lysine 51. A Mn(2+)-binding site is contributed by histidine 74. Residue lysine 90 is modified to N6-acetyllysine. Lysine 98 and lysine 106 each carry N6-acetyllysine; alternate. Residues lysine 98 and lysine 106 each carry the N6-succinyllysine; alternate modification. Residues aspartate 159 and histidine 163 each contribute to the Mn(2+) site. The residue at position 178 (lysine 178) is an N6-acetyllysine.

The protein belongs to the iron/manganese superoxide dismutase family. As to quaternary structure, homotetramer. The cofactor is Mn(2+). In terms of processing, nitrated under oxidative stress. Nitration coupled with oxidation inhibits the catalytic activity. Post-translationally, acetylation at Lys-98 decreases enzymatic activity. Deacetylated by SIRT3 upon exposure to ionizing radiations or after long fasting. Polyubiquitinated; leading to proteasomal degradation. Deubiquitinated by USP36 which increases protein stability.

It is found in the mitochondrion matrix. The catalysed reaction is 2 superoxide + 2 H(+) = H2O2 + O2. In terms of biological role, destroys superoxide anion radicals which are normally produced within the cells and which are toxic to biological systems. The protein is Superoxide dismutase [Mn], mitochondrial (SOD2) of Pan troglodytes (Chimpanzee).